An 850-amino-acid chain; its full sequence is Adenylate cyclase (850 aa).

The tract at residues 1–535 is catalytic; sequence MYLYIETLKQ…DISHHFPLRL (535 aa). The regulatory stretch occupies residues 541 to 850; sequence KALYSPCEIR…SLPTKQCQLH (310 aa).

This sequence belongs to the adenylyl cyclase class-1 family.

The protein localises to the cytoplasm. The enzyme catalyses ATP = 3',5'-cyclic AMP + diphosphate. Its activity is regulated as follows. The regulatory domain is involved in the regulation of cyclase activity by the carbon source. The polypeptide is Adenylate cyclase (cya) (Yersinia pestis).